The sequence spans 502 residues: Activin receptor type-1-like (502 aa).

An N-terminal signal peptide occupies residues 1–22; it reads MTLGSFRRGLLMLSVAFGLTRG. Over 23-119 the chain is Extracellular; it reads DLAKPSKLVN…EEPEVDAHLP (97 aa). N-linked (GlcNAc...) asparagine glycosylation occurs at Asn-32. Disulfide bonds link Cys-33-Cys-50, Cys-35-Cys-40, and Cys-45-Cys-68. Positions 72–75 are mediates specificity for BMP ligand; that stretch reads NQEL. 2 cysteine pairs are disulfide-bonded: Cys-76–Cys-88 and Cys-89–Cys-94. A glycan (N-linked (GlcNAc...) asparagine) is linked at Asn-97. The chain crosses the membrane as a helical span at residues 120–140; that stretch reads LILGPVLALPVLVALGALGLW. Residues 141-502 are Cytoplasmic-facing; the sequence is RVRRRQEKQR…HNPEKPKVIH (362 aa). Phosphoserine occurs at positions 154, 159, and 160. The 30-residue stretch at 171 to 200 folds into the GS domain; sequence SMLGDFLDSDCTTGSGSGLPFLVQRTVARQ. The Protein kinase domain maps to 201–502; it reads VALVECVGKG…HNPEKPKVIH (302 aa). Residues 207 to 215 and Lys-228 each bind ATP; that span reads VGKGRYGEV. Asp-329 serves as the catalytic Proton acceptor.

It belongs to the protein kinase superfamily. TKL Ser/Thr protein kinase family. TGFB receptor subfamily. Interacts with TSC22D1/TSC-22. Mg(2+) serves as cofactor. Requires Mn(2+) as cofactor.

It is found in the cell membrane. The enzyme catalyses L-threonyl-[receptor-protein] + ATP = O-phospho-L-threonyl-[receptor-protein] + ADP + H(+). It carries out the reaction L-seryl-[receptor-protein] + ATP = O-phospho-L-seryl-[receptor-protein] + ADP + H(+). Its function is as follows. Type I receptor for TGF-beta family ligands BMP9/GDF2 and BMP10 and important regulator of normal blood vessel development. On ligand binding, forms a receptor complex consisting of two type II and two type I transmembrane serine/threonine kinases. Type II receptors phosphorylate and activate type I receptors which autophosphorylate, then bind and activate SMAD transcriptional regulators. May bind activin as well. This Mus musculus (Mouse) protein is Activin receptor type-1-like (Acvrl1).